The sequence spans 111 residues: WAP four-disulfide core domain protein 12 (111 aa).

The signal sequence occupies residues 1–23 (MRSSRFLVLMVSLALVTLVASEG). A WAP domain is found at 27-74 (NTEKPGVCPADNVRCIKSDPPQCHTDQDCQGIRKCCYLHCGFKCVIPV). 4 cysteine pairs are disulfide-bonded: Cys34/Cys62, Cys41/Cys66, Cys49/Cys61, and Cys55/Cys70.

The protein localises to the secreted. In terms of biological role, antibacterial protein. Putative acid-stable proteinase inhibitor. This chain is WAP four-disulfide core domain protein 12 (WFDC12), found in Saimiri boliviensis boliviensis (Bolivian squirrel monkey).